Reading from the N-terminus, the 390-residue chain is Heparan sulfate glucosamine 3-O-sulfotransferase 3B1 (390 aa).

The disordered stretch occupies residues 1–25 (MGQRLSGGRSCLDVPGRLLPQPPPP). The Cytoplasmic portion of the chain corresponds to 1 to 32 (MGQRLSGGRSCLDVPGRLLPQPPPPPPPVRRK). The chain crosses the membrane as a helical; Signal-anchor for type II membrane protein span at residues 33 to 53 (LALLFAMLCVWLYMFLYSCAG). The Lumenal segment spans residues 54 to 390 (SCAAAPGLLL…QMTGHDFGWD (337 aa)). The segment at 74-133 (PPALATAPDGTPPRLPFRAPPATPLASGKEMAEGAASPEEQSPEVPDSPSPISSFFSGSG) is disordered. Residues 83 to 96 (GTPPRLPFRAPPAT) are compositionally biased toward pro residues. A compositionally biased stretch (low complexity) spans 123 to 133 (SPISSFFSGSG). 147–151 (KGGTR) is a binding site for 3'-phosphoadenylyl sulfate. Residues 169 to 175 (EPHFFDR) and 200 to 203 (KTPS) contribute to the substrate site. Positions 228 and 236 each coordinate 3'-phosphoadenylyl sulfate. Asparagine 258 carries N-linked (GlcNAc...) asparagine glycosylation. 268-269 (WS) is a binding site for substrate. Asparagine 329 carries N-linked (GlcNAc...) asparagine glycosylation. A disulfide bond links cysteine 336 and cysteine 348. 353–357 (KGRTH) is a 3'-phosphoadenylyl sulfate binding site.

It belongs to the sulfotransferase 1 family. As to expression, ubiquitous. Most abundant in liver and placenta, followed by heart and kidney.

The protein resides in the golgi apparatus membrane. The catalysed reaction is alpha-D-glucosaminyl-[heparan sulfate](n) + 3'-phosphoadenylyl sulfate = 3-sulfo-alpha-D-glucosaminyl-[heparan sulfate](n) + adenosine 3',5'-bisphosphate + H(+). Sulfotransferase that utilizes 3'-phospho-5'-adenylyl sulfate (PAPS) to catalyze the transfer of a sulfo group to an N-unsubstituted glucosamine linked to a 2-O-sulfo iduronic acid unit on heparan sulfate. Catalyzes the O-sulfation of glucosamine in IdoUA2S-GlcNS and also in IdoUA2S-GlcNH2. The substrate-specific O-sulfation generates an enzyme-modified heparan sulfate which acts as a binding receptor to Herpes simplex virus-1 (HSV-1) and permits its entry. Unlike HS3ST1/3-OST-1, does not convert non-anticoagulant heparan sulfate to anticoagulant heparan sulfate. The protein is Heparan sulfate glucosamine 3-O-sulfotransferase 3B1 (HS3ST3B1) of Homo sapiens (Human).